The sequence spans 414 residues: Methylthioribose-1-phosphate isomerase (414 aa).

The segment covering 205–215 (SQSQGSENPPS) has biased composition (polar residues). The interval 205–224 (SQSQGSENPPSKKQKKDAAP) is disordered. The active-site Proton donor is the aspartate 283.

Belongs to the eIF-2B alpha/beta/delta subunits family. MtnA subfamily.

The protein localises to the cytoplasm. It is found in the nucleus. The catalysed reaction is 5-(methylsulfanyl)-alpha-D-ribose 1-phosphate = 5-(methylsulfanyl)-D-ribulose 1-phosphate. Its pathway is amino-acid biosynthesis; L-methionine biosynthesis via salvage pathway; L-methionine from S-methyl-5-thio-alpha-D-ribose 1-phosphate: step 1/6. Its function is as follows. Catalyzes the interconversion of methylthioribose-1-phosphate (MTR-1-P) into methylthioribulose-1-phosphate (MTRu-1-P). This Zygosaccharomyces rouxii (strain ATCC 2623 / CBS 732 / NBRC 1130 / NCYC 568 / NRRL Y-229) protein is Methylthioribose-1-phosphate isomerase.